The primary structure comprises 454 residues: tRNA modification GTPase MnmE (454 aa).

3 residues coordinate (6S)-5-formyl-5,6,7,8-tetrahydrofolate: arginine 23, glutamate 80, and lysine 120. The region spanning 216–377 (GMKVVIAGRP…LRNHLKQSMG (162 aa)) is the TrmE-type G domain. Asparagine 226 lines the K(+) pocket. GTP contacts are provided by residues 226–231 (NAGKSS), 245–251 (TDIAGTT), 270–273 (DTAG), 335–338 (NKAD), and 358–360 (SAR). Serine 230 serves as a coordination point for Mg(2+). Residues threonine 245, isoleucine 247, and threonine 250 each coordinate K(+). Threonine 251 lines the Mg(2+) pocket. Lysine 454 provides a ligand contact to (6S)-5-formyl-5,6,7,8-tetrahydrofolate.

The protein belongs to the TRAFAC class TrmE-Era-EngA-EngB-Septin-like GTPase superfamily. TrmE GTPase family. Homodimer. Heterotetramer of two MnmE and two MnmG subunits. Requires K(+) as cofactor.

The protein localises to the cytoplasm. Exhibits a very high intrinsic GTPase hydrolysis rate. Involved in the addition of a carboxymethylaminomethyl (cmnm) group at the wobble position (U34) of certain tRNAs, forming tRNA-cmnm(5)s(2)U34. In Salmonella typhimurium (strain LT2 / SGSC1412 / ATCC 700720), this protein is tRNA modification GTPase MnmE.